The primary structure comprises 549 residues: S-methyl thiourocanate hydratase (549 aa).

Residues M49, G173, M174, G175, D193, S198, N239, A240, Q260, V270, and Y318 each coordinate NAD(+).

Belongs to the urocanase family. S-methyl thiourocanate hydratase subfamily. Requires NAD(+) as cofactor.

It catalyses the reaction S-methyl-(E)-thiourocanate + H2O = S-methyl-thiohydantoin-5-propanoate. Its function is as follows. Hydratase involved in the catabolism of S-methyl ergothioneine. Catalyzes the 1,4-addition of H(2)O to S-methyl thiourocanate, leading to the formation of S-methyl-thiohydantoin-5-propanoate, the second step in S-methyl ergothioneine degradation. Cannot use urocanate or thiourocanate as substrate. In Variovorax sp. (strain JCM 16519 / RA8), this protein is S-methyl thiourocanate hydratase.